We begin with the raw amino-acid sequence, 433 residues long: Serine--tRNA ligase (433 aa).

235-237 (TSE) contributes to the L-serine binding site. 266-268 (RSE) provides a ligand contact to ATP. An L-serine-binding site is contributed by Glu289. ATP is bound at residue 353–356 (EISS). Residue Ser388 participates in L-serine binding.

The protein belongs to the class-II aminoacyl-tRNA synthetase family. Type-1 seryl-tRNA synthetase subfamily. As to quaternary structure, homodimer. The tRNA molecule binds across the dimer.

It is found in the cytoplasm. The catalysed reaction is tRNA(Ser) + L-serine + ATP = L-seryl-tRNA(Ser) + AMP + diphosphate + H(+). It carries out the reaction tRNA(Sec) + L-serine + ATP = L-seryl-tRNA(Sec) + AMP + diphosphate + H(+). Its pathway is aminoacyl-tRNA biosynthesis; selenocysteinyl-tRNA(Sec) biosynthesis; L-seryl-tRNA(Sec) from L-serine and tRNA(Sec): step 1/1. Functionally, catalyzes the attachment of serine to tRNA(Ser). Is also able to aminoacylate tRNA(Sec) with serine, to form the misacylated tRNA L-seryl-tRNA(Sec), which will be further converted into selenocysteinyl-tRNA(Sec). This Burkholderia thailandensis (strain ATCC 700388 / DSM 13276 / CCUG 48851 / CIP 106301 / E264) protein is Serine--tRNA ligase.